The chain runs to 708 residues: Elongation factor G (708 aa).

A tr-type G domain is found at 8-290 (KRYRNIGISA…AVIQYLPAPM (283 aa)). Residues 17–24 (AHIDAGKT), 88–92 (DTPGH), and 142–145 (NKMD) contribute to the GTP site.

It belongs to the TRAFAC class translation factor GTPase superfamily. Classic translation factor GTPase family. EF-G/EF-2 subfamily.

Its subcellular location is the cytoplasm. In terms of biological role, catalyzes the GTP-dependent ribosomal translocation step during translation elongation. During this step, the ribosome changes from the pre-translocational (PRE) to the post-translocational (POST) state as the newly formed A-site-bound peptidyl-tRNA and P-site-bound deacylated tRNA move to the P and E sites, respectively. Catalyzes the coordinated movement of the two tRNA molecules, the mRNA and conformational changes in the ribosome. This Psychrobacter arcticus (strain DSM 17307 / VKM B-2377 / 273-4) protein is Elongation factor G.